The chain runs to 338 residues: Ferredoxin--NADP reductase (338 aa).

FAD contacts are provided by aspartate 35, glutamine 43, tyrosine 48, alanine 88, phenylalanine 122, aspartate 289, and threonine 330.

The protein belongs to the ferredoxin--NADP reductase type 2 family. In terms of assembly, homodimer. FAD serves as cofactor.

The enzyme catalyses 2 reduced [2Fe-2S]-[ferredoxin] + NADP(+) + H(+) = 2 oxidized [2Fe-2S]-[ferredoxin] + NADPH. The protein is Ferredoxin--NADP reductase of Ehrlichia chaffeensis (strain ATCC CRL-10679 / Arkansas).